Reading from the N-terminus, the 205-residue chain is Interleukin-6 (205 aa).

Residues 1 to 21 (RFTSAFSLGLLLVTATAFPTP) form the signal peptide. A disulfide bond links Cys64 and Cys70. Ser73 carries the post-translational modification Phosphoserine. The cysteines at positions 93 and 103 are disulfide-linked. Asn164 carries N-linked (GlcNAc...) asparagine glycosylation.

It belongs to the IL-6 superfamily. In terms of assembly, component of a hexamer of two molecules each of IL6, IL6R and IL6ST; first binds to IL6R to associate with the signaling subunit IL6ST. Interacts with IL6R (via the N-terminal ectodomain); this interaction may be affected by IL6R-binding with SORL1, hence decreasing IL6 cis signaling. Interacts with SORL1 (via the N-terminal ectodomain); this interaction leads to IL6 internalization and lysosomal degradation. May form a trimeric complex with the soluble SORL1 ectodomain and soluble IL6R receptor; this interaction might stabilize circulating IL6, hence promoting IL6 trans signaling.

It localises to the secreted. Cytokine with a wide variety of biological functions in immunity, tissue regeneration, and metabolism. Binds to IL6R, then the complex associates to the signaling subunit IL6ST/gp130 to trigger the intracellular IL6-signaling pathway. The interaction with the membrane-bound IL6R and IL6ST stimulates 'classic signaling', whereas the binding of IL6 and soluble IL6R to IL6ST stimulates 'trans-signaling'. Alternatively, 'cluster signaling' occurs when membrane-bound IL6:IL6R complexes on transmitter cells activate IL6ST receptors on neighboring receiver cells. Its function is as follows. IL6 is a potent inducer of the acute phase response. Rapid production of IL6 contributes to host defense during infection and tissue injury, but excessive IL6 synthesis is involved in disease pathology. In the innate immune response, is synthesized by myeloid cells, such as macrophages and dendritic cells, upon recognition of pathogens through toll-like receptors (TLRs) at the site of infection or tissue injury. In the adaptive immune response, is required for the differentiation of B cells into immunoglobulin-secreting cells. Plays a major role in the differentiation of CD4(+) T cell subsets. Essential factor for the development of T follicular helper (Tfh) cells that are required for the induction of germinal-center formation. Required to drive naive CD4(+) T cells to the Th17 lineage. Also required for proliferation of myeloma cells and the survival of plasmablast cells. Functionally, acts as an essential factor in bone homeostasis and on vessels directly or indirectly by induction of VEGF, resulting in increased angiogenesis activity and vascular permeability. Induces, through 'trans-signaling' and synergistically with IL1B and TNF, the production of VEGF. Involved in metabolic controls, is discharged into the bloodstream after muscle contraction increasing lipolysis and improving insulin resistance. 'Trans-signaling' in central nervous system also regulates energy and glucose homeostasis. Mediates, through GLP-1, crosstalk between insulin-sensitive tissues, intestinal L cells and pancreatic islets to adapt to changes in insulin demand. Also acts as a myokine. Plays a protective role during liver injury, being required for maintenance of tissue regeneration. Also has a pivotal role in iron metabolism by regulating HAMP/hepcidin expression upon inflammation or bacterial infection. Through activation of IL6ST-YAP-NOTCH pathway, induces inflammation-induced epithelial regeneration. The sequence is that of Interleukin-6 (IL6) from Orcinus orca (Killer whale).